We begin with the raw amino-acid sequence, 398 residues long: Lysophosphatidylserine lipase ABHD12 (398 aa).

Residues 1-15 (MRKRTEPVTLEHERC) show a composition bias toward basic and acidic residues. The tract at residues 1-24 (MRKRTEPVTLEHERCAASGSSSSG) is disordered. Over 1–74 (MRKRTEPVTL…RKSLWFRLRK (74 aa)) the chain is Cytoplasmic. The chain crosses the membrane as a helical span at residues 75–95 (ILLCVLGFYIAIPFLVKLCPG). The Extracellular segment spans residues 96 to 398 (IQAKLIFLNF…LGKSEPERQH (303 aa)). The N-linked (GlcNAc...) asparagine glycan is linked to Asn123. Catalysis depends on Ser246, which acts as the Nucleophile. Active-site charge relay system residues include Asp333 and His372.

The protein belongs to the serine esterase family.

It localises to the endoplasmic reticulum membrane. It carries out the reaction 1-(9Z-octadecenoyl)-sn-glycero-3-phospho-L-serine + H2O = sn-glycero-3-phospho-L-serine + (9Z)-octadecenoate + H(+). It catalyses the reaction 1-(9Z-octadecenoyl)-sn-glycero-3-phospho-(1'-sn-glycerol) + H2O = sn-glycero-3-phospho-(1'-sn-glycerol) + (9Z)-octadecenoate + H(+). The catalysed reaction is 1-(9Z-octadecenoyl)-sn-glycero-3-phospho-(1D-myo-inositol) + H2O = sn-glycero-3-phospho-1D-myo-inositol + (9Z)-octadecenoate + H(+). The enzyme catalyses 1-(9Z-octadecenoyl)-sn-glycero-3-phosphoethanolamine + H2O = sn-glycero-3-phosphoethanolamine + (9Z)-octadecenoate + H(+). It carries out the reaction 1-(9Z-octadecenoyl)-sn-glycero-3-phosphocholine + H2O = 1-(9Z-octadecenoyl)-sn-glycerol + phosphocholine + H(+). It catalyses the reaction 2-(9Z-octadecenoyl)-glycerol + H2O = glycerol + (9Z)-octadecenoate + H(+). The catalysed reaction is 1-hexadecanoyl-sn-glycero-3-phospho-L-serine + H2O = sn-glycero-3-phospho-L-serine + hexadecanoate + H(+). The enzyme catalyses 2-(5Z,8Z,11Z,14Z-eicosatetraenoyl)-glycerol + H2O = glycerol + (5Z,8Z,11Z,14Z)-eicosatetraenoate + H(+). It carries out the reaction Hydrolyzes glycerol monoesters of long-chain fatty acids.. It catalyses the reaction 1-decanoylglycerol + H2O = decanoate + glycerol + H(+). The catalysed reaction is 1-dodecanoylglycerol + H2O = dodecanoate + glycerol + H(+). The enzyme catalyses 1-tetradecanoylglycerol + H2O = tetradecanoate + glycerol + H(+). It carries out the reaction 2-hexadecanoylglycerol + H2O = glycerol + hexadecanoate + H(+). It catalyses the reaction 1-(9Z-octadecenoyl)-glycerol + H2O = glycerol + (9Z)-octadecenoate + H(+). The catalysed reaction is 2-(9Z,12Z-octadecadienoyl)-glycerol + H2O = (9Z,12Z)-octadecadienoate + glycerol + H(+). The enzyme catalyses 1-(5Z,8Z,11Z,14Z-eicosatetraenoyl)-glycerol + H2O = glycerol + (5Z,8Z,11Z,14Z)-eicosatetraenoate + H(+). It carries out the reaction 1-(9Z,12Z-octadecadienoyl)-glycerol + H2O = (9Z,12Z)-octadecadienoate + glycerol + H(+). It catalyses the reaction 1-hexadecanoylglycerol + H2O = glycerol + hexadecanoate + H(+). The catalysed reaction is 1-octadecanoylglycerol + H2O = octadecanoate + glycerol + H(+). The enzyme catalyses 1-octadecanoyl-2-(9,10-epoxyoctadecanoyl)-sn-glycero-3-phospho-L-serine + H2O = 9,10-epoxyoctadecanoate + 1-octadecanoyl-sn-glycero-3-phosphoserine + H(+). It carries out the reaction 1-octadecanoyl-2-(10-hydroxyoctadecanoyl)-sn-glycero-3-phospho-L-serine + H2O = 1-octadecanoyl-sn-glycero-3-phosphoserine + 10-hydroxyoctadecanoate + H(+). It catalyses the reaction 1-hexadecanoyl-2-(10-hydroxyoctadecanoyl)-sn-glycero-3-phospho-L-serine + H2O = 10-hydroxyoctadecanoate + 1-hexadecanoyl-sn-glycero-3-phospho-L-serine + H(+). Its function is as follows. Lysophosphatidylserine (LPS) lipase that mediates the hydrolysis of lysophosphatidylserine, a class of signaling lipids that regulates immunological and neurological processes. Represents a major lysophosphatidylserine lipase in the brain, thereby playing a key role in the central nervous system. Also able to hydrolyze oxidized phosphatidylserine; oxidized phosphatidylserine is produced in response to severe inflammatory stress and constitutes a proapoptotic 'eat me' signal. Also has monoacylglycerol (MAG) lipase activity: hydrolyzes 2-arachidonoylglycerol (2-AG), thereby acting as a regulator of endocannabinoid signaling pathways. Has a strong preference for very-long-chain lipid substrates; substrate specificity is likely due to improved catalysis and not improved substrate binding. The polypeptide is Lysophosphatidylserine lipase ABHD12 (Rattus norvegicus (Rat)).